The chain runs to 540 residues: Chaperonin GroEL (540 aa).

Residues 29 to 32 (TLGP), 86 to 90 (DGTTT), G413, 477 to 479 (DAL), and D493 contribute to the ATP site.

Belongs to the chaperonin (HSP60) family. As to quaternary structure, forms a cylinder of 14 subunits composed of two heptameric rings stacked back-to-back. Interacts with the co-chaperonin GroES.

It localises to the cytoplasm. The catalysed reaction is ATP + H2O + a folded polypeptide = ADP + phosphate + an unfolded polypeptide.. In terms of biological role, together with its co-chaperonin GroES, plays an essential role in assisting protein folding. The GroEL-GroES system forms a nano-cage that allows encapsulation of the non-native substrate proteins and provides a physical environment optimized to promote and accelerate protein folding. The protein is Chaperonin GroEL of Clostridium botulinum (strain Eklund 17B / Type B).